Consider the following 176-residue polypeptide: Inorganic pyrophosphatase (176 aa).

Residues K30, R44, and Y56 each contribute to the substrate site. Mg(2+) contacts are provided by D66, D71, and D103. Residue Y142 participates in substrate binding.

Belongs to the PPase family. In terms of assembly, homohexamer. The cofactor is Mg(2+).

It localises to the cytoplasm. The enzyme catalyses diphosphate + H2O = 2 phosphate + H(+). In terms of biological role, catalyzes the hydrolysis of inorganic pyrophosphate (PPi) forming two phosphate ions. This is Inorganic pyrophosphatase from Vibrio cholerae serotype O1 (strain ATCC 39315 / El Tor Inaba N16961).